A 387-amino-acid chain; its full sequence is tRNA pseudouridine synthase B (387 aa).

Asp43 (nucleophile) is an active-site residue.

The protein belongs to the pseudouridine synthase TruB family. Type 1 subfamily.

The catalysed reaction is uridine(55) in tRNA = pseudouridine(55) in tRNA. Responsible for synthesis of pseudouridine from uracil-55 in the psi GC loop of transfer RNAs. The protein is tRNA pseudouridine synthase B of Bifidobacterium longum (strain NCC 2705).